A 445-amino-acid polypeptide reads, in one-letter code: 3-phosphoshikimate 1-carboxyvinyltransferase (445 aa).

The disordered stretch occupies residues 1 to 25 (MSHSDQTSPLEARKSAALSGTARVP). Positions 28, 29, and 33 each coordinate 3-phosphoshikimate. Phosphoenolpyruvate is bound at residue Lys28. Gly101 and Arg129 together coordinate phosphoenolpyruvate. Residues Ser175, Gln177, Asp328, and Lys355 each coordinate 3-phosphoshikimate. Residue Gln177 participates in phosphoenolpyruvate binding. The active-site Proton acceptor is Asp328. Phosphoenolpyruvate-binding residues include Arg359 and Arg402.

This sequence belongs to the EPSP synthase family. In terms of assembly, monomer.

Its subcellular location is the cytoplasm. It catalyses the reaction 3-phosphoshikimate + phosphoenolpyruvate = 5-O-(1-carboxyvinyl)-3-phosphoshikimate + phosphate. It participates in metabolic intermediate biosynthesis; chorismate biosynthesis; chorismate from D-erythrose 4-phosphate and phosphoenolpyruvate: step 6/7. Functionally, catalyzes the transfer of the enolpyruvyl moiety of phosphoenolpyruvate (PEP) to the 5-hydroxyl of shikimate-3-phosphate (S3P) to produce enolpyruvyl shikimate-3-phosphate and inorganic phosphate. The protein is 3-phosphoshikimate 1-carboxyvinyltransferase of Rhodopseudomonas palustris (strain BisB5).